Consider the following 73-residue polypeptide: Homeodomain-only protein (73 aa).

Positions 3-62 form a DNA-binding region, homeobox; degenerate; sequence TEKSVTPTEEQLEILEYNFCKVNKHPDPTTLCLIAAETGLSEEQTLKWFKQRLAEWRKSE.

It is found in the nucleus. Its subcellular location is the cytoplasm. In terms of biological role, atypical homeodomain protein which does not bind DNA and is required to modulate cardiac growth and development. May act via an interaction with SRF, leading to modulate the expression of SRF-dependent cardiac-specific genes and cardiac development. May act as a co-chaperone for HSPA1A and HSPA1B chaperone proteins and assist in chaperone-mediated protein refolding. The chain is Homeodomain-only protein (HOPX) from Gallus gallus (Chicken).